Here is a 472-residue protein sequence, read N- to C-terminus: Siroheme synthase (472 aa).

Residues 1–204 (MDYLPIFTKL…GQTEKAIALM (204 aa)) are precorrin-2 dehydrogenase /sirohydrochlorin ferrochelatase. NAD(+) contacts are provided by residues 22–23 (SI) and 43–44 (LE). The residue at position 128 (S128) is a Phosphoserine. Residues 215-472 (GDVALVGAGP…SRDPFLVNLA (258 aa)) are uroporphyrinogen-III C-methyltransferase. Residue P224 coordinates S-adenosyl-L-methionine. The active-site Proton acceptor is the D247. K269 acts as the Proton donor in catalysis. S-adenosyl-L-methionine is bound by residues 300–302 (GGD), I305, 330–331 (TA), M382, and G411.

The protein in the N-terminal section; belongs to the precorrin-2 dehydrogenase / sirohydrochlorin ferrochelatase family. It in the C-terminal section; belongs to the precorrin methyltransferase family.

The catalysed reaction is uroporphyrinogen III + 2 S-adenosyl-L-methionine = precorrin-2 + 2 S-adenosyl-L-homocysteine + H(+). It catalyses the reaction precorrin-2 + NAD(+) = sirohydrochlorin + NADH + 2 H(+). It carries out the reaction siroheme + 2 H(+) = sirohydrochlorin + Fe(2+). It participates in cofactor biosynthesis; adenosylcobalamin biosynthesis; precorrin-2 from uroporphyrinogen III: step 1/1. Its pathway is cofactor biosynthesis; adenosylcobalamin biosynthesis; sirohydrochlorin from precorrin-2: step 1/1. The protein operates within porphyrin-containing compound metabolism; siroheme biosynthesis; precorrin-2 from uroporphyrinogen III: step 1/1. It functions in the pathway porphyrin-containing compound metabolism; siroheme biosynthesis; siroheme from sirohydrochlorin: step 1/1. It participates in porphyrin-containing compound metabolism; siroheme biosynthesis; sirohydrochlorin from precorrin-2: step 1/1. Multifunctional enzyme that catalyzes the SAM-dependent methylations of uroporphyrinogen III at position C-2 and C-7 to form precorrin-2 via precorrin-1. Then it catalyzes the NAD-dependent ring dehydrogenation of precorrin-2 to yield sirohydrochlorin. Finally, it catalyzes the ferrochelation of sirohydrochlorin to yield siroheme. This chain is Siroheme synthase, found in Psychromonas ingrahamii (strain DSM 17664 / CCUG 51855 / 37).